The chain runs to 158 residues: Antitoxin TacA (158 aa).

The protein belongs to the TacA antitoxin family. In terms of assembly, forms a complex with cognate toxin TacT.

Functionally, antitoxin component of a type II toxin-antitoxin (TA) system. Counteracts the toxic effect of cognate toxin TacT. In terms of biological role, tacA-TacT both represses and derepresses expression of its own operon. The polypeptide is Antitoxin TacA (Mycobacterium tuberculosis (strain ATCC 25618 / H37Rv)).